Here is a 1317-residue protein sequence, read N- to C-terminus: uncharacterized protein (1317 aa).

This sequence belongs to the oxoprolinase family.

This is an uncharacterized protein from Schizosaccharomyces pombe (strain 972 / ATCC 24843) (Fission yeast).